The following is a 365-amino-acid chain: Beta-parvin (365 aa).

The segment covering 1–12 has biased composition (pro residues); it reads MSSAPPRSPTPR. The tract at residues 1 to 52 is disordered; the sequence is MSSAPPRSPTPRAPKMKKDESFLGKLGGTLARKKKTREVTDLQEEGKSAINS. Residue Ser-8 is modified to Phosphoserine. The span at 37–47 shows a compositional bias: basic and acidic residues; it reads REVTDLQEEGK. Calponin-homology (CH) domains follow at residues 88–195 and 255–362; these read KELV…MHFR and NLVK…TKYK.

This sequence belongs to the parvin family. As to quaternary structure, interacts with ILK, ARHGEF6, PXN (via LD motifs), ACTN2 and actin. Interacts with DYSF. Post-translationally, phosphorylated by ILK. As to expression, expressed predominantly in heart and moderately in spleen, lung and skeletal muscle.

The protein localises to the cell junction. The protein resides in the focal adhesion. It localises to the cell membrane. It is found in the cytoplasm. Its subcellular location is the cytoskeleton. The protein localises to the cell projection. The protein resides in the lamellipodium. It localises to the myofibril. It is found in the sarcomere. Its subcellular location is the z line. In terms of biological role, adapter protein that plays a role in integrin signaling via ILK and in activation of the GTPases CDC42 and RAC1 by guanine exchange factors, such as ARHGEF6. Is involved in the reorganization of the actin cytoskeleton and formation of lamellipodia. Plays a role in cell adhesion, cell spreading, establishment or maintenance of cell polarity, and cell migration. The sequence is that of Beta-parvin (Parvb) from Mus musculus (Mouse).